Consider the following 372-residue polypeptide: Pluviatolide O-methyltransferase (372 aa).

G214, D237, D257, M258, and K271 together coordinate S-adenosyl-L-homocysteine. The active-site Proton acceptor is the H275. Active-site residues include D306 and E338.

It belongs to the class I-like SAM-binding methyltransferase superfamily. Cation-independent O-methyltransferase family. COMT subfamily. Homodimer. As to expression, mostly expressed in stems, and, to a lower extent, in leaves.

It carries out the reaction (-)-pluviatolide + S-adenosyl-L-methionine = (-)-bursehernin + S-adenosyl-L-homocysteine + H(+). It functions in the pathway aromatic compound metabolism; phenylpropanoid biosynthesis. In terms of biological role, O-methyltransferase involved in the biosynthesis of etoposide, a chemotherapeutic compound of the topoisomerase inhibitor family. Catalyzes the methylation of (-)-pluviatolide to produce (-)-bursehernin. The polypeptide is Pluviatolide O-methyltransferase (Sinopodophyllum hexandrum (Himalayan may apple)).